The following is a 366-amino-acid chain: MEMLEDLESLRFEFGIPEEERYWLYLQGRYRGLMIKGCAHAAFFCKMFSTLSNLLQNLPRTIHPRTVSFDNAATEDELLTVGIIGCGHLGKQLTNVLLKTVPIPAENLQISTRRPESLGELRKLGVRCVYDNAAVASWAKVLFLCCLPAQLPNICLEIQSKLNKHCTVYSFVSAIPLPRLKSLLNHTNILRPQYQFAEDYDNIWGENEEVPIALQDTTIIRGTCPYNNLGGVILNVKWIEGLCYALINACTSRSVFHSQVLKLLNKLLLPMHLESCTTDPESCPQFNLTDFMSKSYVKNLYQKRPFPWFDLTTVQLKETPFSQHISATPSLQDHISLLYCEVFGLTISEEELPYISTVIRPLVEEK.

Belongs to the pyrroline-5-carboxylate reductase family.

In terms of biological role, probable oxidoreductase. This is NADP-dependent oxidoreductase domain-containing protein 1 (Noxred1) from Mus musculus (Mouse).